The sequence spans 156 residues: Small ribosomal subunit protein uS7 (156 aa).

It belongs to the universal ribosomal protein uS7 family. As to quaternary structure, part of the 30S ribosomal subunit. Contacts proteins S9 and S11.

In terms of biological role, one of the primary rRNA binding proteins, it binds directly to 16S rRNA where it nucleates assembly of the head domain of the 30S subunit. Is located at the subunit interface close to the decoding center, probably blocks exit of the E-site tRNA. In Leuconostoc mesenteroides subsp. mesenteroides (strain ATCC 8293 / DSM 20343 / BCRC 11652 / CCM 1803 / JCM 6124 / NCDO 523 / NBRC 100496 / NCIMB 8023 / NCTC 12954 / NRRL B-1118 / 37Y), this protein is Small ribosomal subunit protein uS7.